We begin with the raw amino-acid sequence, 83 residues long: Large ribosomal subunit protein bL27 (83 aa).

Belongs to the bacterial ribosomal protein bL27 family.

In Thermotoga maritima (strain ATCC 43589 / DSM 3109 / JCM 10099 / NBRC 100826 / MSB8), this protein is Large ribosomal subunit protein bL27 (rpmA).